The following is a 198-amino-acid chain: Small ribosomal subunit protein uS4c (198 aa).

An S4 RNA-binding domain is found at 85–145; that stretch reads LRLDATIFRL…PKKFTIILIC (61 aa).

It belongs to the universal ribosomal protein uS4 family. Part of the 30S ribosomal subunit.

It localises to the plastid. The protein resides in the apicoplast. Its function is as follows. One of the primary rRNA binding proteins, it binds directly to 16S rRNA where it nucleates assembly of the body of the 30S subunit. This chain is Small ribosomal subunit protein uS4c (rps4), found in Toxoplasma gondii.